A 109-amino-acid chain; its full sequence is Large ribosomal subunit protein P1 (109 aa).

The segment at 71-109 (APAAASSAPAKKEEPKKEEPKKEEPKEEETDMDMGDLFG) is disordered. Residues 80–95 (AKKEEPKKEEPKKEEP) are compositionally biased toward basic and acidic residues. Tandem repeats lie at residues 81–85 (KKEEP), 86–90 (KKEEP), and 91–95 (KKEEP). The interval 81 to 95 (KKEEPKKEEPKKEEP) is 3 X 5 AA tandem repeats of K-K-E-E-P. Residues 96–109 (KEEETDMDMGDLFG) are compositionally biased toward acidic residues.

This sequence belongs to the eukaryotic ribosomal protein P1/P2 family. Post-translationally, not phosphorylated.

This chain is Large ribosomal subunit protein P1 (RPLP1), found in Tetrahymena thermophila.